The chain runs to 392 residues: Frizzled-9 (392 aa).

Over 1–35 (ACDNPEKFQYVEKSLSCAPRCSPGVDVYWSREDKD) the chain is Extracellular. Residues 36–56 (FAFVWMAVWSTLCFVSTAFTV) traverse the membrane as a helical segment. Residues 57–72 (LTFLLDPHRFQYPERP) lie on the Cytoplasmic side of the membrane. A helical membrane pass occupies residues 73-93 (IIFLSMCYNVYSVAFIIRSVA). Topologically, residues 94-119 (GAETIACDRENGELYIIQEGLESTGC) are extracellular. A helical transmembrane segment spans residues 120 to 140 (TIVFLILYYFGMASSLWWVVL). The Cytoplasmic segment spans residues 141–161 (TLTWFLAAGKKWGHEAIEAHS). A helical transmembrane segment spans residues 162-182 (SYFHMAAWGIPAMKTIVILTM). Topologically, residues 183–206 (RKVAGDELTGLCYVGSMDVSALTG) are extracellular. The helical transmembrane segment at 207–227 (FVLIPLSCYLVVGTSFILTGF) threads the bilayer. Residues 228–253 (VALFHIRKIMKTGGTNTEKLEKLMVK) are Cytoplasmic-facing. The chain crosses the membrane as a helical span at residues 254–274 (IGVFSILYTVPATCVIVCYFY). Residues 275 to 312 (ERLNVDYWNLRALERACVPLPGRRAADCSLEASVPTVA) lie on the Extracellular side of the membrane. The helical transmembrane segment at 313-333 (VFMLKIFMSLVVGITSGVWVW) threads the bilayer. Residues 334–392 (SSKTLQTWQSLCNRKLGVRTRGKPCSGVSCGGVHCHYKAPTVMLHMTKTDPYLDNPTHV) lie on the Cytoplasmic side of the membrane. Residues 336-341 (KTLQTW) carry the Lys-Thr-X-X-X-Trp motif, mediates interaction with the PDZ domain of Dvl family members motif. Positions 390-392 (THV) match the PDZ-binding motif.

It belongs to the G-protein coupled receptor Fz/Smo family.

The protein localises to the cell membrane. Its function is as follows. Receptor for WNT2 that is coupled to the beta-catenin canonical signaling pathway, which leads to the activation of disheveled proteins, inhibition of GSK-3 kinase, nuclear accumulation of beta-catenin and activation of Wnt target genes. The protein is Frizzled-9 (FZD9) of Gallus gallus (Chicken).